Consider the following 320-residue polypeptide: Mitochondrial thiamine pyrophosphate carrier (320 aa).

Solcar repeat units follow at residues 13–106 (NTKF…LTEL), 116–202 (REFS…LKHL), and 214–309 (NENL…FCNV). The chain crosses the membrane as a helical span at residues 19 to 39 (AVAGSVSGLVTRALISPFDVI). Ser51 carries the post-translational modification Phosphoserine. Helical transmembrane passes span 87–107 (ILSI…TELV), 122–142 (FVCG…VDVL), 173–193 (VFYK…GLQF), and 220–240 (LLCG…LDLF). The Substrate recognition motif lies at 241–246 (KKRLQV). The helical transmembrane segment at 293–313 (ALSTGFMFFSYEFFCNVFHCM) threads the bilayer.

The protein belongs to the mitochondrial carrier (TC 2.A.29) family. Expressed in all tissues examined except for placenta. Highest levels in colon, kidney, lung, testis, spleen, and brain.

It localises to the mitochondrion membrane. It carries out the reaction thiamine phosphate(out) + thiamine diphosphate(in) = thiamine phosphate(in) + thiamine diphosphate(out). Mitochondrial transporter mediating uptake of thiamine diphosphate into mitochondria. It is not clear if the antiporter activity is affected by the membrane potential or by the proton electrochemical gradient. This Homo sapiens (Human) protein is Mitochondrial thiamine pyrophosphate carrier.